We begin with the raw amino-acid sequence, 1429 residues long: Nitric oxide synthase 1 (1429 aa).

An interaction with NOSIP region spans residues 1-200 (MEENTFGVQQ…LQDIGEHDEL (200 aa)). One can recognise a PDZ domain in the interval 17–99 (SVRLFKRKVG…ETHVVLILRG (83 aa)). Disordered regions lie at residues 152 to 174 (VTGLGNGPQHAQGHGQGAGSVSQ), 214 to 255 (GSKA…DNDR), and 271 to 298 (NNPYSEKEQSPTSGKQSPTKNGSPSRCP). The segment covering 160-174 (QHAQGHGQGAGSVSQ) has biased composition (low complexity). An interaction with DYNLL1/PIN region spans residues 163 to 240 (QGHGQGAGSV…TGIQVDRDLD (78 aa)). Residues 226 to 243 (AEMKDTGIQVDRDLDGKS) show a composition bias toward basic and acidic residues. A Phosphoserine modification is found at Ser280. The span at 280 to 294 (SPTSGKQSPTKNGSP) shows a compositional bias: polar residues. Ser334 serves as a coordination point for (6R)-L-erythro-5,6,7,8-tetrahydrobiopterin. Residue Cys415 participates in heme b binding. Residues Gln478, Trp587, Tyr588, and Glu592 each coordinate L-arginine. (6R)-L-erythro-5,6,7,8-tetrahydrobiopterin is bound by residues Val677, Trp678, and Phe691. Tyr706 lines the heme b pocket. Positions 725–745 (KRRAIGFKKLAEAVKFSAKLM) are calmodulin-binding. In terms of domain architecture, Flavodoxin-like spans 755–935 (ATILYATETG…AFRTWAKKVF (181 aa)). Positions 761, 762, 763, 765, 766, 807, 808, and 812 each coordinate FMN. Phosphoserine is present on residues Ser847, Ser857, and Ser858. Residues Ser886, His891, Cys893, Glu919, and Gln923 each contribute to the FMN site. Residues 990–1237 (KRVSAARLLS…VRGAPSFHLP (248 aa)) enclose the FAD-binding FR-type domain. Arg1010 provides a ligand contact to NADP(+). His1032, Arg1173, Tyr1174, Tyr1175, Ser1176, Thr1191, and Ala1193 together coordinate FAD. Residue Ser1196 participates in NADP(+) binding. Tyr1197, Val1210, Cys1211, and Ser1212 together coordinate FAD. The NADP(+) site is built by Thr1251, Arg1284, Ser1313, Arg1314, Lys1320, Tyr1322, Gln1324, Asp1357, Thr1398, and Arg1400.

This sequence belongs to the NOS family. As to quaternary structure, homodimer. Interacts with DLG4 (via N-terminal tandem pair of PDZ domains); the interaction possibly being prevented by the association between NOS1 and CAPON. Forms a ternary complex with CAPON and RASD1. Forms a ternary complex with CAPON and SYN1. Interacts with ZDHHC23. Interacts with NOSIP; which may impair its synaptic location. Interacts with HTR4. Interacts with SLC6A4. Interacts with VAC14. Forms a complex with ASL, ASS1 and SLC7A1; the complex regulates cell-autonomous L-arginine synthesis and citrulline recycling while channeling extracellular L-arginine to nitric oxide synthesis pathway. Interacts with DMD; localizes NOS1 to sarcolemma in muscle cells. Interacts with DYNLL1; inhibits the nitric oxide synthase activity. Heme b serves as cofactor. The cofactor is FAD. Requires FMN as cofactor. It depends on (6R)-L-erythro-5,6,7,8-tetrahydrobiopterin as a cofactor. Post-translationally, ubiquitinated; mediated by STUB1/CHIP in the presence of Hsp70 and Hsp40 (in vitro). In terms of tissue distribution, isoform N-NOS-1 is expressed in brain and colorectum. Found in the Auerbach's plexus of the enteric nervous system. Isoform PNNOS is expressed in the penis, urethra, prostate, and skeletal muscle, and coexists with the cerebellar nnos in the pelvic plexus, bladder and liver, and is detectable in the cerebellum.

It localises to the cell membrane. The protein localises to the sarcolemma. It is found in the cell projection. The protein resides in the dendritic spine. The enzyme catalyses 2 L-arginine + 3 NADPH + 4 O2 + H(+) = 2 L-citrulline + 2 nitric oxide + 3 NADP(+) + 4 H2O. Its activity is regulated as follows. Stimulated by calcium/calmodulin. Inhibited by DYNLL1 that prevents the dimerization of the protein. Inhibited by NOSIP. Its function is as follows. Produces nitric oxide (NO) which is a messenger molecule with diverse functions throughout the body. In the brain and peripheral nervous system, NO displays many properties of a neurotransmitter. Inhibitory transmitter for non-adrenergic and non-cholinergic nerves in the colorectum. Probably has nitrosylase activity and mediates cysteine S-nitrosylation of cytoplasmic target proteins such SRR. Inhibitory transmitter for non-adrenergic and non-cholinergic nerves in the colorectum. This Rattus norvegicus (Rat) protein is Nitric oxide synthase 1.